The primary structure comprises 416 residues: Glutamyl-tRNA reductase (416 aa).

Substrate-binding positions include 49–52, S105, 110–112, and Q116; these read TCNR and EPQ. C50 acts as the Nucleophile in catalysis. Residue 185–190 participates in NADP(+) binding; that stretch reads GAGETI.

Belongs to the glutamyl-tRNA reductase family. As to quaternary structure, homodimer.

It catalyses the reaction (S)-4-amino-5-oxopentanoate + tRNA(Glu) + NADP(+) = L-glutamyl-tRNA(Glu) + NADPH + H(+). The protein operates within porphyrin-containing compound metabolism; protoporphyrin-IX biosynthesis; 5-aminolevulinate from L-glutamyl-tRNA(Glu): step 1/2. Catalyzes the NADPH-dependent reduction of glutamyl-tRNA(Glu) to glutamate 1-semialdehyde (GSA). This Shewanella piezotolerans (strain WP3 / JCM 13877) protein is Glutamyl-tRNA reductase.